We begin with the raw amino-acid sequence, 223 residues long: Uracil-DNA glycosylase (223 aa).

Aspartate 64 serves as the catalytic Proton acceptor.

It belongs to the uracil-DNA glycosylase (UDG) superfamily. UNG family.

Its subcellular location is the cytoplasm. It catalyses the reaction Hydrolyzes single-stranded DNA or mismatched double-stranded DNA and polynucleotides, releasing free uracil.. Excises uracil residues from the DNA which can arise as a result of misincorporation of dUMP residues by DNA polymerase or due to deamination of cytosine. This is Uracil-DNA glycosylase from Desulfitobacterium hafniense (strain DSM 10664 / DCB-2).